The following is a 721-amino-acid chain: Polyribonucleotide nucleotidyltransferase (721 aa).

Residues Asp-486 and Asp-492 each coordinate Mg(2+). Positions 553-612 (PKIVQLQIDIDKISLVIGSTGKTVKAITDEFEVKVQIEQNGKIILFGDDDFKMQKAKERI) constitute a KH domain. Residues 622–716 (GEIYEGIVKK…KFGKIDLEVV (95 aa)) form the S1 motif domain.

Belongs to the polyribonucleotide nucleotidyltransferase family. Mg(2+) serves as cofactor.

The protein resides in the cytoplasm. The enzyme catalyses RNA(n+1) + phosphate = RNA(n) + a ribonucleoside 5'-diphosphate. Involved in mRNA degradation. Catalyzes the phosphorolysis of single-stranded polyribonucleotides processively in the 3'- to 5'-direction. This is Polyribonucleotide nucleotidyltransferase from Borrelia garinii subsp. bavariensis (strain ATCC BAA-2496 / DSM 23469 / PBi) (Borreliella bavariensis).